The primary structure comprises 93 residues: Large ribosomal subunit protein uL23cz/uL23cy (93 aa).

It belongs to the universal ribosomal protein uL23 family. As to quaternary structure, part of the 50S ribosomal subunit.

The protein localises to the plastid. It localises to the chloroplast. Its function is as follows. Binds to 23S rRNA. The chain is Large ribosomal subunit protein uL23cz/uL23cy (rpl23-A) from Gossypium barbadense (Sea Island cotton).